A 149-amino-acid polypeptide reads, in one-letter code: UPF0251 protein Moth_1655 (149 aa).

The segment at 129 to 149 (AGRGPGRGRCHRHGRFGEGEH) is disordered.

The protein belongs to the UPF0251 family.

This Moorella thermoacetica (strain ATCC 39073 / JCM 9320) protein is UPF0251 protein Moth_1655.